The sequence spans 136 residues: Acidic phospholipase A2 CC-PLA2-2 (136 aa).

The N-terminal stretch at 1-16 is a signal peptide; sequence MRTLWIVAVWLMGVEG. Disulfide bonds link Cys42–Cys129, Cys44–Cys60, Cys59–Cys109, Cys65–Cys136, Cys66–Cys102, Cys73–Cys95, and Cys90–Cys100. The Ca(2+) site is built by Tyr43, Gly45, and Gly47. The active site involves His63. Residue Asp64 coordinates Ca(2+). Asp103 is a catalytic residue.

The protein belongs to the phospholipase A2 family. Group II subfamily. D49 sub-subfamily. Ca(2+) is required as a cofactor. In terms of processing, glycosylated (2.5%). Expressed by the venom gland.

It localises to the secreted. The catalysed reaction is a 1,2-diacyl-sn-glycero-3-phosphocholine + H2O = a 1-acyl-sn-glycero-3-phosphocholine + a fatty acid + H(+). Functionally, snake venom phospholipase A2 that inhibits blood coagulation and platelet aggregation induced by ADP and arachidonic acid. Inhibits tumor cell adhesion and migration in a dose-dependent manner. Abolishes the attachment of human brain microvascular endothelial cells (HBMEC) to fibrinogen (IC(50)=0.2 uM) and dramatically reduces its adhesion to fibronectin (IC(50)=0.3 uM), whereas no effect is observed on type I collagen, vitronectin or laminin 1. Also blocks the cell migration toward fibronectin and fibrinogen. These effects are not dependent of the catalytic activity, but are mediated by alpha-5/beta-1 (ITGA5/ITGB1) and alpha-v-containing (ITGAV) integrins. Also shows anti-angiogenic activity in chicken chorioallantoix membrane assay. Has a relatively high enzymatic activity. PLA2 catalyzes the calcium-dependent hydrolysis of the 2-acyl groups in 3-sn-phosphoglycerides. This is Acidic phospholipase A2 CC-PLA2-2 from Cerastes cerastes (Horned desert viper).